We begin with the raw amino-acid sequence, 824 residues long: AMP deaminase 2 (824 aa).

Residues 1–43 are disordered; sequence MASYPGPGKSKAKYPFKKRAGLQASAAAPEARSGLGASPLQSA. The segment covering 10–20 has biased composition (basic residues); sequence SKAKYPFKKRA. Arg-44 bears the Omega-N-methylarginine mark. Ser-45, Ser-63, and Ser-79 each carry phosphoserine. A Phosphotyrosine modification is found at Tyr-90. Residues Ser-96 and Ser-113 each carry the phosphoserine modification. The residue at position 133 (Thr-133) is a Phosphothreonine. Residues Ser-135 and Ser-137 each carry the phosphoserine modification. Zn(2+) is bound by residues His-364 and His-366. Substrate-binding positions include His-366 and 435–440; that span reads KFNAKY. His-633 contacts Zn(2+). Glu-636 contributes to the substrate binding site. His-655 serves as the catalytic Proton acceptor. Residue Asp-710 participates in Zn(2+) binding. A substrate-binding site is contributed by 711–714; that stretch reads DPLQ.

Belongs to the metallo-dependent hydrolases superfamily. Adenosine and AMP deaminases family. Homotetramer. Zn(2+) is required as a cofactor.

The enzyme catalyses AMP + H2O + H(+) = IMP + NH4(+). It functions in the pathway purine metabolism; IMP biosynthesis via salvage pathway; IMP from AMP: step 1/1. Its function is as follows. AMP deaminase plays a critical role in energy metabolism. Catalyzes the deamination of AMP to IMP and plays an important role in the purine nucleotide cycle. This chain is AMP deaminase 2, found in Mus musculus (Mouse).